Consider the following 209-residue polypeptide: Molybdenum cofactor guanylyltransferase (209 aa).

Residues 16–18, lysine 28, asparagine 56, aspartate 69, and aspartate 103 contribute to the GTP site; that span reads LAG. Aspartate 103 is a binding site for Mg(2+).

This sequence belongs to the MobA family. As to quaternary structure, monomer. The cofactor is Mg(2+).

The protein resides in the cytoplasm. It carries out the reaction Mo-molybdopterin + GTP + H(+) = Mo-molybdopterin guanine dinucleotide + diphosphate. Functionally, transfers a GMP moiety from GTP to Mo-molybdopterin (Mo-MPT) cofactor (Moco or molybdenum cofactor) to form Mo-molybdopterin guanine dinucleotide (Mo-MGD) cofactor. In Rhizobium leguminosarum bv. trifolii (strain WSM2304), this protein is Molybdenum cofactor guanylyltransferase.